The primary structure comprises 420 residues: MTNELLKDLEWRGLIYQQTDAEGLENILNKEQVTLYCGVDPTADSMHIGHLLPLLTLRRFQNHGHKPIVLIGGGTGMIGDPSGKTDERVLQTEEQVEQNVRGIGNQMDKIFDFSGKEAAQLVNNRDWLGKISLIDFLRDYGKHVGVNYMLGKDSVQSRLENGISYTEFTYMILQAIDFGHLNREYNCKVQIGGSDQWGNITSGIELMRRMYGQTEAYGITIPLVTKADGKKFGKSEAGTVWLDAEKTSPYELYQFWINTTDADVIKFLKYFTFLDKEEIERLEQSKEEAPHLREAQKALAENVVRFIHGEGALNDAIRISEALFSGDLKALSSDELREGFKDVPQAEVSNATTNIVDFIVEAGISSSKRQAREDVSNGAIYINGEREQDLKYEISEADKIDNEFTIVRRGKKKYFMVKYK.

Y36 is a binding site for L-tyrosine. The 'HIGH' region motif lies at 41 to 50 (PTADSMHIGH). Residues Y170 and Q174 each coordinate L-tyrosine. The 'KMSKS' region signature appears at 231–235 (KFGKS). K234 provides a ligand contact to ATP. The 68-residue stretch at 353–420 (TNIVDFIVEA…KKKYFMVKYK (68 aa)) folds into the S4 RNA-binding domain.

This sequence belongs to the class-I aminoacyl-tRNA synthetase family. TyrS type 1 subfamily. Homodimer.

The protein resides in the cytoplasm. The enzyme catalyses tRNA(Tyr) + L-tyrosine + ATP = L-tyrosyl-tRNA(Tyr) + AMP + diphosphate + H(+). Its function is as follows. Catalyzes the attachment of tyrosine to tRNA(Tyr) in a two-step reaction: tyrosine is first activated by ATP to form Tyr-AMP and then transferred to the acceptor end of tRNA(Tyr). This Staphylococcus carnosus (strain TM300) protein is Tyrosine--tRNA ligase.